A 274-amino-acid polypeptide reads, in one-letter code: Putative pyruvate, phosphate dikinase regulatory protein (274 aa).

151–158 (GVSRTSKT) serves as a coordination point for ADP.

This sequence belongs to the pyruvate, phosphate/water dikinase regulatory protein family. PDRP subfamily.

It catalyses the reaction N(tele)-phospho-L-histidyl/L-threonyl-[pyruvate, phosphate dikinase] + ADP = N(tele)-phospho-L-histidyl/O-phospho-L-threonyl-[pyruvate, phosphate dikinase] + AMP + H(+). The enzyme catalyses N(tele)-phospho-L-histidyl/O-phospho-L-threonyl-[pyruvate, phosphate dikinase] + phosphate + H(+) = N(tele)-phospho-L-histidyl/L-threonyl-[pyruvate, phosphate dikinase] + diphosphate. In terms of biological role, bifunctional serine/threonine kinase and phosphorylase involved in the regulation of the pyruvate, phosphate dikinase (PPDK) by catalyzing its phosphorylation/dephosphorylation. This Pelagibacter ubique (strain HTCC1062) protein is Putative pyruvate, phosphate dikinase regulatory protein.